The primary structure comprises 306 residues: Mitochondrial substrate carrier family protein M (306 aa).

Residues 1-10 are Mitochondrial intermembrane-facing; sequence MRYILNNNVE. Solcar repeat units lie at residues 5 to 98, 108 to 195, and 207 to 299; these read LNNN…YKNI, LNTF…IKFY, and LNAS…IKKS. A helical membrane pass occupies residues 11–31; the sequence is GTSALLGSTVATAFLQPFDFL. Topologically, residues 32 to 72 are mitochondrial matrix; it reads KIRLQGSGFASGGDLNKFKRVGVIDTCKNVLKNEGIKQFWR. Residues 73-89 traverse the membrane as a helical segment; that stretch reads GSSPTIVASGIAWGTYM. Topologically, residues 90 to 113 are mitochondrial intermembrane; it reads HFYEAYKNILKSKYNVTQLNTFDH. Residues 114-134 form a helical membrane-spanning segment; sequence FICAVGASATQVFITNPIFLI. Topologically, residues 135-163 are mitochondrial matrix; the sequence is KTRMQLQTPGSANYYTGIFDGIKKTVKVE. Residues 164–184 form a helical membrane-spanning segment; it reads GFKGLYKGVIPSLWLTFHGGI. At 185–211 the chain is on the mitochondrial intermembrane side; it reads QMSSYEHIKFYFSSNSGKSLDSLNASE. The chain crosses the membrane as a helical span at residues 212-232; that stretch reads IFIASSISKFLASTILYPFQV. Residues 233–278 lie on the Mitochondrial matrix side of the membrane; sequence VKTRLQDERNIPNQNNVRVYNGTKDVIFKILKNEGIIGFYRGLVPN. A helical membrane pass occupies residues 279–296; the sequence is TLKVIPNTSITLLLYEEI. Residues 297–306 lie on the Mitochondrial intermembrane side of the membrane; the sequence is KKSFNYIINE.

It belongs to the mitochondrial carrier (TC 2.A.29) family.

The protein localises to the mitochondrion inner membrane. Its function is as follows. Mitochondrial solute carriers shuttle metabolites, nucleotides, and cofactors through the mitochondrial inner membrane. Transports folate across the inner membranes of mitochondria. The polypeptide is Mitochondrial substrate carrier family protein M (mcfM) (Dictyostelium discoideum (Social amoeba)).